Consider the following 514-residue polypeptide: Na(+)/H(+) antiporter NhaB (514 aa).

The next 12 membrane-spanning stretches (helical) occupy residues 23–43, 63–83, 97–117, 120–140, 144–164, 202–222, 238–258, 303–323, 357–377, 391–411, 447–467, and 475–495; these read LALL…PFIA, PLLP…TSAA, LLLM…LFIF, LLLS…AAAF, FLDA…FYGI, LMMH…VGEP, FFLR…LTCM, AVIG…VGLI, LTVF…APII, LFYL…VGTI, ATPN…APLI, and VWMA…CVEF.

Belongs to the NhaB Na(+)/H(+) (TC 2.A.34) antiporter family.

It localises to the cell inner membrane. It carries out the reaction 2 Na(+)(in) + 3 H(+)(out) = 2 Na(+)(out) + 3 H(+)(in). Na(+)/H(+) antiporter that extrudes sodium in exchange for external protons. The protein is Na(+)/H(+) antiporter NhaB of Salmonella newport (strain SL254).